The chain runs to 260 residues: Ribosomal RNA small subunit methyltransferase J (260 aa).

S-adenosyl-L-methionine contacts are provided by residues 125-126 and Asp-179; that span reads ER.

It belongs to the methyltransferase superfamily. RsmJ family.

Its subcellular location is the cytoplasm. It catalyses the reaction guanosine(1516) in 16S rRNA + S-adenosyl-L-methionine = N(2)-methylguanosine(1516) in 16S rRNA + S-adenosyl-L-homocysteine + H(+). In terms of biological role, specifically methylates the guanosine in position 1516 of 16S rRNA. The chain is Ribosomal RNA small subunit methyltransferase J from Pseudomonas fluorescens (strain ATCC BAA-477 / NRRL B-23932 / Pf-5).